The chain runs to 283 residues: D-alanine aminotransferase (283 aa).

Tyr-32 serves as a coordination point for substrate. Residue Arg-51 coordinates pyridoxal 5'-phosphate. Arg-99 and His-101 together coordinate substrate. Lys-146 serves as the catalytic Proton acceptor. The residue at position 146 (Lys-146) is an N6-(pyridoxal phosphate)lysine. Glu-178 is a pyridoxal 5'-phosphate binding site.

It belongs to the class-IV pyridoxal-phosphate-dependent aminotransferase family. As to quaternary structure, homodimer. It depends on pyridoxal 5'-phosphate as a cofactor.

The catalysed reaction is D-alanine + 2-oxoglutarate = D-glutamate + pyruvate. Functionally, acts on the D-isomers of alanine, leucine, aspartate, glutamate, aminobutyrate, norvaline and asparagine. The enzyme transfers an amino group from a substrate D-amino acid to the pyridoxal phosphate cofactor to form pyridoxamine and an alpha-keto acid in the first half-reaction. The second-half reaction is the reverse of the first, transferring the amino group from the pyridoxamine to a second alpha-keto acid to form the product D-amino acid via a ping-pong mechanism. This is an important process in the formation of D-alanine and D-glutamate, which are essential bacterial cell wall components. The sequence is that of D-alanine aminotransferase (dat) from Bacillus sp. (strain YM-1).